Reading from the N-terminus, the 247-residue chain is ATP synthase subunit a, chloroplastic (247 aa).

5 helical membrane-spanning segments follow: residues 38–58 (QVLITSWVVITILLGSVLIAV), 95–115 (VPFIGTMFLFIFVSNWSGALL), 134–154 (INTTVALALLTSAAYFYAGLS), 199–219 (LVVVVLVSLVPLVVPIPVMFL), and 220–240 (GLFTSGIQALIFATLAAAYIG).

This sequence belongs to the ATPase A chain family. F-type ATPases have 2 components, CF(1) - the catalytic core - and CF(0) - the membrane proton channel. CF(1) has five subunits: alpha(3), beta(3), gamma(1), delta(1), epsilon(1). CF(0) has four main subunits: a, b, b' and c.

The protein localises to the plastid. The protein resides in the chloroplast thylakoid membrane. Its function is as follows. Key component of the proton channel; it plays a direct role in the translocation of protons across the membrane. The protein is ATP synthase subunit a, chloroplastic of Brachypodium distachyon (Purple false brome).